The primary structure comprises 309 residues: MILTVTLNPAIDVSYPLDELKCDTVNRVVDVTKTPGGKGLNVCRVLNDFGETVKATGCIGGESGDFIINHLPDSILSRFYKISGDTRTCIVILHEGNQTEILEKGPLLSVEEIDGFTHHFKYLLNDVDVVTLSGSLPAGMPDDYYQKLIGIANLNGKKTVLDCSGNALEAVLKGDSKPTVIKPNLEELSQLLGKEMTKDFEALKEVLQDELFEGIEWIIVSLGADGVFAKHNDTFYNVDIPKIEIVSAVGSGDSTVAGIASGLANDEDDRALLTKANVLGMLNAQEKTTGHVNMANYDKLYQSIKVKEV.

It belongs to the carbohydrate kinase PfkB family. LacC subfamily.

The catalysed reaction is D-tagatofuranose 6-phosphate + ATP = D-tagatofuranose 1,6-bisphosphate + ADP + H(+). Its pathway is carbohydrate metabolism; D-tagatose 6-phosphate degradation; D-glyceraldehyde 3-phosphate and glycerone phosphate from D-tagatose 6-phosphate: step 1/2. This chain is Tagatose-6-phosphate kinase, found in Streptococcus pyogenes serotype M5 (strain Manfredo).